Reading from the N-terminus, the 76-residue chain is ATP synthase subunit 9, mitochondrial (76 aa).

Transmembrane regions (helical) follow at residues 14–34 (ISTI…AALI) and 48–68 (FPFA…CLMV).

The protein belongs to the ATPase C chain family. As to quaternary structure, F-type ATPases have 2 components, CF(1) - the catalytic core - and CF(0) - the membrane proton channel. CF(1) has five subunits: alpha(3), beta(3), gamma(1), delta(1), epsilon(1). CF(0) has three main subunits: a, b and c.

Its subcellular location is the mitochondrion membrane. Its function is as follows. Mitochondrial membrane ATP synthase (F(1)F(0) ATP synthase or Complex V) produces ATP from ADP in the presence of a proton gradient across the membrane which is generated by electron transport complexes of the respiratory chain. F-type ATPases consist of two structural domains, F(1) - containing the extramembraneous catalytic core and F(0) - containing the membrane proton channel, linked together by a central stalk and a peripheral stalk. During catalysis, ATP synthesis in the catalytic domain of F(1) is coupled via a rotary mechanism of the central stalk subunits to proton translocation. Part of the complex F(0) domain. A homomeric c-ring of probably 10 subunits is part of the complex rotary element. The polypeptide is ATP synthase subunit 9, mitochondrial (ATP9) (Cyberlindnera mrakii (Yeast)).